The following is a 442-amino-acid chain: UDP-N-acetylglucosamine--peptide N-acetylglucosaminyltransferase stabilizing protein GtfB (442 aa).

The protein belongs to the GtfB family. In terms of assembly, interacts with glycosyltransferase GtfA (Gtf1). Interacts with glycosyltransferase GtfA; probably forms a heterotetramer with 2 subunits each of GtfA and GtfB. Part of the accessory SecA2/SecY2 protein translocation apparatus.

It is found in the cell membrane. It participates in protein modification; protein glycosylation. Functionally, required for the polymorphic O-glycosylation of the serine-rich repeat protein Srr2. A stabilizing protein that is part of the accessory SecA2/SecY2 system specifically required to export serine-rich repeat proteins, probably Srr2 in this organism. The GtfA-GtfB (Gtf1-Gtf2 in this bacteria) complex adds GlcNAc from UDP-GlcNAc to Srr2 substrate, attaching the first sugar residue. Stabilizes the glycosylation activity of GtfA in vivo. Upon expression in a gtfB deletion mutant of S.parasanguis, GtfB confers incorrect glycosylation and partial complementation of a biofilm formation defect, while GtfA/GtfB restores correct expression of serine-rich repeat protein Fap1 and completely restores a biofilm formation defect in a S.parasanguis double gtfA-gtfB deletion. The chain is UDP-N-acetylglucosamine--peptide N-acetylglucosaminyltransferase stabilizing protein GtfB from Streptococcus agalactiae.